The primary structure comprises 685 residues: Protein argonaute (685 aa).

The segment at 1 to 99 is N-terminal domain; that stretch reads MNHLGKTEVF…LYPKGRRPLD (99 aa). A linker L1 region spans residues 100–176; sequence PKDPGERSVL…VDPAYRILCE (77 aa). The PAZ domain maps to 169 to 265; the sequence is PAYRILCEMS…HLTGLLVPVL (97 aa). Residues 272-337 form a linker L2 region; it reads EEEGSLALSL…SKPADALRVG (66 aa). The mid domain stretch occupies residues 338–463; the sequence is FYRAQETALA…LLAKAGLQVV (126 aa). Residues 464–685 form a PIWI domain region; the sequence is ALSGAYPAEL…EVDREKLFFV (222 aa). Catalysis depends on residues aspartate 478, glutamate 512, aspartate 546, and aspartate 660. Aspartate 478 lines the Mn(2+) pocket. The Piwi domain occupies 507-671; that stretch reads EAQAGERIPQ…LVKEVGRLGI (165 aa). 3 residues coordinate Mn(2+): aspartate 546, aspartate 660, and valine 685.

It belongs to the argonaute family. Long pAgo subfamily. In terms of assembly, coimmunoprecipitates with a number of proteins involved in DNA replication or recombination including RepA (initiates replication), AddA/B (TT_C0638 and TT_C0639), ArgR, GyrA/B, HU (TT_C0984), PriA, Rad52 (TT_C1923), RecJ, SSB, TopA and UvrB. Most proteins remain associated with TtAgo after DNase treatment and associate with catalytically inactive protein. Mn(2+) is required as a cofactor.

Functionally, a DNA-guided ssDNA endonuclease. Uses short ssDNA sequences as guides (gDNA, also called small interfering DNA, siDNA) to bind complementary DNA target strands, resulting in cleavage of the target DNA (tDNA). The cleavage site is 10 nucleotides (nt) downstream of the target residue base-paired with the 5'-end of the gDNA. Plays a role in completion of DNA replication, participates in decatenating replicated DNA and plasmid. In situ purifies with 5'-phosphorylated long DNA (about 1160 nt, maps to the whole chromosome and plasmid), 25-35 nt RNAs that map to the whole chromosome and 15-18 nt DNA that maps to the replication terminus region (ter) on the chromosome and plasmid. Most short DNA starts with dC. Has been shown to have guide sequence-independent dsDNase activity called 'chopping', which requires unstable DNA (high AT-content, multiple mismatches or low salt conditions), and could be used to generate gDNA. Preferentially binds tDNA with dC at its 3'-terminus. Has also been shown to have no detectable guide sequence-independent dsDNase activity. The latter study proposes TtAgo may acquire gDNA from nicked dsDNA, by binding to 5'-phosphorylated-dC nicks, then cleaving 10 nt away on the opposite strand; subsequently an exonuclease (maybe AddA-AddB helicase/nuclease) trims the ends to generate the gDNA. Involved in defense against invading mobile genetic elements. TtAgo interferes with plasmid DNA, stimulates expression of specific endogenous genes, including various CRISPR loci and at least part of the CRISPR adaptation machinery, but only when exogenous plasmid DNA is present. Upon purification from E.coli associates with gDNA 13-25 nt long with 5'-phosphorylated ends and with 10-150 nt RNA with 5'-OH. DNA corresponds to the expression plasmid rather than chromosomal DNA; 89% of gDNA starts with dC and 72% has dA in the second position. Endonucleolytically cleaves tDNA with 5'-phosphorylated gDNA but not 5'-phosphorylated gRNA; the active site is involved in processing or binding of ssDNA. Nicks or linearizes supercoiled plasmid target when it has the appropriate gDNA sequences, does not cleave linear tDNA. Positions 4 to 16 of the tDNA need to be base paired to the gDNA for efficient tDNA cleavage. Although the system can support single nucleotide insertions in either the gDNA or tDNA, in all cases cleavage activity is reduced, with a wide range of sequence- and position-specific effects. In terms of biological role, first characterized as a DNA-guided RNA endonuclease. Uses gDNA to bind complementary RNA target strands, resulting in cleavage of the target RNA. The cleavage site is 10 nucleotides (nt) downstream of the target residue base-paired with the 5'-end of the guide DNA. This is Protein argonaute from Thermus thermophilus (strain ATCC BAA-163 / DSM 7039 / HB27).